The primary structure comprises 269 residues: Hdr-like menaquinol oxidoreductase iron-sulfur subunit 1 (269 aa).

The segment at residues 1–26 (MMSRRKFLLLTGAAAAGAILTPQISA) is a signal peptide (tat-type signal). [4Fe-4S] cluster contacts are provided by cysteine 52, cysteine 55, cysteine 72, cysteine 76, cysteine 118, cysteine 121, cysteine 126, cysteine 130, cysteine 150, cysteine 153, cysteine 156, cysteine 160, cysteine 194, cysteine 197, cysteine 215, and cysteine 219. Residues 141-170 (GIVEIDMHRCIGCRYCMIACPYGARCFNFI) form the 4Fe-4S ferredoxin-type domain.

Consists of five subunits: an integral membrane subunit, a cytochrome b-like subunit, a cytochrome c subunit and two iron-sulfur subunits. The cofactor is [4Fe-4S] cluster. Predicted to be exported by the Tat system. The position of the signal peptide cleavage has been experimentally proven.

The protein resides in the cell membrane. In terms of biological role, has menaquinol-oxidizing activity. HmeA, HmeB and HmeE subunits may together catalyze electron transfer from menaquinol to cytochrome c. The protein is Hdr-like menaquinol oxidoreductase iron-sulfur subunit 1 (hmeA) of Archaeoglobus fulgidus (strain ATCC 49558 / DSM 4304 / JCM 9628 / NBRC 100126 / VC-16).